A 730-amino-acid chain; its full sequence is Trimethylamine dehydrogenase (730 aa).

4 residues coordinate FMN: P29, C31, Y61, and E104. S-6-FMN cysteine is present on C31. 170–173 (YGAH) contributes to the substrate binding site. Residue Y175 is the Proton donor of the active site. The FMN site is built by R223, D268, R300, A322, and R323. Residues C346, C349, C352, and C365 each coordinate [4Fe-4S] cluster. ADP is bound by residues S401, D420, T421, H428, M471, and D675.

The protein in the N-terminal section; belongs to the NADH:flavin oxidoreductase/NADH oxidase family. As to quaternary structure, homodimer. Forms a ternary complex with the heterodimeric electron transfer flavoprotein. Requires FMN as cofactor. [4Fe-4S] cluster serves as cofactor.

The enzyme catalyses trimethylamine + oxidized [electron-transfer flavoprotein] + H2O + H(+) = dimethylamine + reduced [electron-transfer flavoprotein] + formaldehyde. The polypeptide is Trimethylamine dehydrogenase (Methylophilus methylotrophus (Bacterium W3A1)).